We begin with the raw amino-acid sequence, 1110 residues long: Ribosome assembly protein 1 (1110 aa).

Residues 17–262 (SCIRNICIVA…QKLGAKRENL (246 aa)) form the tr-type G domain. Residues 26–33 (AHVDHGKT), 102–106 (DSPGH), and 156–159 (NKID) each bind GTP. A Phosphoserine modification is found at S431.

It belongs to the TRAFAC class translation factor GTPase superfamily. Classic translation factor GTPase family.

The protein localises to the cytoplasm. The enzyme catalyses GTP + H2O = GDP + phosphate + H(+). With respect to regulation, GTPase activity is stimulated in the presence of 60S subunits. Functionally, GTPase involved in the biogenesis of the 60S ribosomal subunit and translational activation of ribosomes. Together with SDO1, may trigger the GTP-dependent release of TIF6 from 60S pre-ribosomes in the cytoplasm, thereby activating ribosomes for translation competence by allowing 80S ribosome assembly and facilitating TIF6 recycling to the nucleus, where it is required for 60S rRNA processing and nuclear export. Inhibits GTPase activity of ribosome-bound EF-2. The protein is Ribosome assembly protein 1 (RIA1) of Saccharomyces cerevisiae (strain ATCC 204508 / S288c) (Baker's yeast).